A 371-amino-acid chain; its full sequence is Anhydro-N-acetylmuramic acid kinase (371 aa).

An ATP-binding site is contributed by 10–17; sequence GTSLDGID.

Belongs to the anhydro-N-acetylmuramic acid kinase family.

The enzyme catalyses 1,6-anhydro-N-acetyl-beta-muramate + ATP + H2O = N-acetyl-D-muramate 6-phosphate + ADP + H(+). Its pathway is amino-sugar metabolism; 1,6-anhydro-N-acetylmuramate degradation. It participates in cell wall biogenesis; peptidoglycan recycling. Functionally, catalyzes the specific phosphorylation of 1,6-anhydro-N-acetylmuramic acid (anhMurNAc) with the simultaneous cleavage of the 1,6-anhydro ring, generating MurNAc-6-P. Is required for the utilization of anhMurNAc either imported from the medium or derived from its own cell wall murein, and thus plays a role in cell wall recycling. The chain is Anhydro-N-acetylmuramic acid kinase from Chromohalobacter salexigens (strain ATCC BAA-138 / DSM 3043 / CIP 106854 / NCIMB 13768 / 1H11).